We begin with the raw amino-acid sequence, 170 residues long: Transcriptional repressor NrdR (170 aa).

Residues 3 to 34 (CPFCRHPDSRVVDSRVTDDGTAIRRRRSCPEC) fold into a zinc finger. The ATP-cone domain occupies 46–136 (LSVIKRSGVI…VYRGFESLED (91 aa)). The interval 151–170 (ERSETVERGRPVPSRGVDDR) is disordered.

It belongs to the NrdR family. The cofactor is Zn(2+).

Its function is as follows. Negatively regulates transcription of bacterial ribonucleotide reductase nrd genes and operons by binding to NrdR-boxes. This chain is Transcriptional repressor NrdR, found in Acidothermus cellulolyticus (strain ATCC 43068 / DSM 8971 / 11B).